Consider the following 202-residue polypeptide: Myosin regulatory light chain 10 (202 aa).

Residues 1-21 (MGQSSLDHGVQGPVAGTGDFG) are disordered. 3 EF-hand domains span residues 60–95 (SQIQ…LGRI), 130–165 (DPEE…QADR), and 166–201 (FSEE…GEEK). Ca(2+) is bound by residues D73, N75, D77, and D84.

In terms of assembly, myosin is a hexamer of 2 heavy chains and 4 light chains. In terms of tissue distribution, specifically expressed in precursor B- and T-lymphocytes.

In Mus musculus (Mouse), this protein is Myosin regulatory light chain 10 (Myl10).